The following is a 180-amino-acid chain: NADH-quinone oxidoreductase subunit I (180 aa).

4Fe-4S ferredoxin-type domains are found at residues 46 to 80 (GRIV…LQKT) and 90 to 119 (EFFR…LTPD). [4Fe-4S] cluster is bound by residues Cys-60, Cys-63, Cys-66, Cys-70, Cys-99, Cys-102, Cys-105, and Cys-109.

Belongs to the complex I 23 kDa subunit family. NDH-1 is composed of 14 different subunits. Subunits NuoA, H, J, K, L, M, N constitute the membrane sector of the complex. It depends on [4Fe-4S] cluster as a cofactor.

The protein localises to the cell membrane. It catalyses the reaction a quinone + NADH + 5 H(+)(in) = a quinol + NAD(+) + 4 H(+)(out). NDH-1 shuttles electrons from NADH, via FMN and iron-sulfur (Fe-S) centers, to quinones in the respiratory chain. The immediate electron acceptor for the enzyme in this species is believed to be ubiquinone. Couples the redox reaction to proton translocation (for every two electrons transferred, four hydrogen ions are translocated across the cytoplasmic membrane), and thus conserves the redox energy in a proton gradient. The sequence is that of NADH-quinone oxidoreductase subunit I from Baumannia cicadellinicola subsp. Homalodisca coagulata.